Reading from the N-terminus, the 64-residue chain is uncharacterized protein (64 aa).

This is an uncharacterized protein from Enterobacteria phage T4 (Bacteriophage T4).